The sequence spans 116 residues: Tachykinin-3 (116 aa).

Residues 1–20 (MRSAMLFAAVLALSLAWTFG) form the signal peptide. Residues 21 to 79 (AVCEEPQGQGGRLSKDSDLYQLPPSLLRRLYDSRPVSLEGLLKVLSKASVGPKETSLPQ) constitute a propeptide that is removed on maturation. Met91 is modified (methionine amide). The interval 93 to 116 (KRNSQPDTPTDVVEENTPSFGILK) is disordered. The propeptide occupies 95-116 (NSQPDTPTDVVEENTPSFGILK).

It belongs to the tachykinin family.

It localises to the secreted. In terms of biological role, tachykinins are active peptides which excite neurons, evoke behavioral responses, are potent vasodilators and secretagogues, and contract (directly or indirectly) many smooth muscles. Is a critical central regulator of gonadal function. The protein is Tachykinin-3 (Tac3) of Mus musculus (Mouse).